The following is a 167-amino-acid chain: 2-C-methyl-D-erythritol 2,4-cyclodiphosphate synthase (167 aa).

A divalent metal cation is bound by residues D9 and H11. Residues 9-11 (DVH) and 35-36 (HS) contribute to the 4-CDP-2-C-methyl-D-erythritol 2-phosphate site. H43 serves as a coordination point for a divalent metal cation. Residues 57-59 (DIG), 62-66 (FPDTD), 133-136 (TTTE), F140, and R143 each bind 4-CDP-2-C-methyl-D-erythritol 2-phosphate.

It belongs to the IspF family. Homotrimer. Requires a divalent metal cation as cofactor.

The catalysed reaction is 4-CDP-2-C-methyl-D-erythritol 2-phosphate = 2-C-methyl-D-erythritol 2,4-cyclic diphosphate + CMP. Its pathway is isoprenoid biosynthesis; isopentenyl diphosphate biosynthesis via DXP pathway; isopentenyl diphosphate from 1-deoxy-D-xylulose 5-phosphate: step 4/6. Its function is as follows. Involved in the biosynthesis of isopentenyl diphosphate (IPP) and dimethylallyl diphosphate (DMAPP), two major building blocks of isoprenoid compounds. Catalyzes the conversion of 4-diphosphocytidyl-2-C-methyl-D-erythritol 2-phosphate (CDP-ME2P) to 2-C-methyl-D-erythritol 2,4-cyclodiphosphate (ME-CPP) with a corresponding release of cytidine 5-monophosphate (CMP). This Glaesserella parasuis serovar 5 (strain SH0165) (Haemophilus parasuis) protein is 2-C-methyl-D-erythritol 2,4-cyclodiphosphate synthase.